The following is a 329-amino-acid chain: Flotillin-like protein FloA (329 aa).

2 consecutive transmembrane segments (helical) span residues 4 to 24 (IGFI…FSFV) and 26 to 46 (VGLW…TLVG).

It belongs to the flotillin-like FloA family. In terms of assembly, homooligomerizes.

It localises to the cell membrane. Its subcellular location is the membrane raft. In terms of biological role, found in functional membrane microdomains (FMM) that may be equivalent to eukaryotic membrane rafts. FMMs are highly dynamic and increase in number as cells age. Flotillins are thought to be important factors in membrane fluidity. The polypeptide is Flotillin-like protein FloA (Staphylococcus epidermidis (strain ATCC 35984 / DSM 28319 / BCRC 17069 / CCUG 31568 / BM 3577 / RP62A)).